The sequence spans 433 residues: Glutamyl-tRNA reductase (433 aa).

Substrate-binding positions include 49 to 52 (TCNR), S114, 119 to 121 (EPQ), and Q125. C50 acts as the Nucleophile in catalysis. 201 to 206 (GAGETI) provides a ligand contact to NADP(+).

It belongs to the glutamyl-tRNA reductase family. In terms of assembly, homodimer.

It catalyses the reaction (S)-4-amino-5-oxopentanoate + tRNA(Glu) + NADP(+) = L-glutamyl-tRNA(Glu) + NADPH + H(+). Its pathway is porphyrin-containing compound metabolism; protoporphyrin-IX biosynthesis; 5-aminolevulinate from L-glutamyl-tRNA(Glu): step 1/2. In terms of biological role, catalyzes the NADPH-dependent reduction of glutamyl-tRNA(Glu) to glutamate 1-semialdehyde (GSA). This Histophilus somni (strain 129Pt) (Haemophilus somnus) protein is Glutamyl-tRNA reductase.